Reading from the N-terminus, the 565-residue chain is Proline--tRNA ligase (565 aa).

It belongs to the class-II aminoacyl-tRNA synthetase family. ProS type 1 subfamily. Homodimer.

It localises to the cytoplasm. The catalysed reaction is tRNA(Pro) + L-proline + ATP = L-prolyl-tRNA(Pro) + AMP + diphosphate. Functionally, catalyzes the attachment of proline to tRNA(Pro) in a two-step reaction: proline is first activated by ATP to form Pro-AMP and then transferred to the acceptor end of tRNA(Pro). As ProRS can inadvertently accommodate and process non-cognate amino acids such as alanine and cysteine, to avoid such errors it has two additional distinct editing activities against alanine. One activity is designated as 'pretransfer' editing and involves the tRNA(Pro)-independent hydrolysis of activated Ala-AMP. The other activity is designated 'posttransfer' editing and involves deacylation of mischarged Ala-tRNA(Pro). The misacylated Cys-tRNA(Pro) is not edited by ProRS. The sequence is that of Proline--tRNA ligase from Bacillus pumilus (strain SAFR-032).